The sequence spans 635 residues: Threonine--tRNA ligase (635 aa).

Residues 1 to 61 form the TGS domain; sequence MIKITLKDGK…HKDSSLEILT (61 aa). Positions 242–532 are catalytic; sequence DHRKLGKELD…LIEQYAGAFP (291 aa). 3 residues coordinate Zn(2+): Cys333, His384, and His509.

This sequence belongs to the class-II aminoacyl-tRNA synthetase family. In terms of assembly, homodimer. Requires Zn(2+) as cofactor.

The protein localises to the cytoplasm. The enzyme catalyses tRNA(Thr) + L-threonine + ATP = L-threonyl-tRNA(Thr) + AMP + diphosphate + H(+). Functionally, catalyzes the attachment of threonine to tRNA(Thr) in a two-step reaction: L-threonine is first activated by ATP to form Thr-AMP and then transferred to the acceptor end of tRNA(Thr). Also edits incorrectly charged L-seryl-tRNA(Thr). The protein is Threonine--tRNA ligase of Clostridium botulinum (strain Okra / Type B1).